The sequence spans 201 residues: Protein FAR-RED-ELONGATED HYPOCOTYL 1-LIKE (201 aa).

The Nuclear localization sequence (NLS) signature appears at 32-35 (KKRK). Residues 43-46 (LLPL) carry the Nuclear export sequence (NES) motif.

This sequence belongs to the FHY1 protein family. Homodimer and heterodimer with FHY1. Interacts with PHYA, especially upon far-red (FR) light illumination. Binds to LAF1 and HFR1. In terms of processing, inactivated by rapid reversible PHYA-mediated phosphorylation.

The protein localises to the nucleus. It localises to the cytoplasm. Can activate transcription. Essential for light-regulated PHYA nuclear accumulation and subsequent PHYA phototropic signaling processes. PHYA-specific signal transducer in response to continuous FR lights. Mediates the association of PHYA with HFR1 and LAF1 in the nucleus in response to FR conditions. Contributes to inhibition of hypocotyl elongation in continuous blue light (B). This is Protein FAR-RED-ELONGATED HYPOCOTYL 1-LIKE from Arabidopsis thaliana (Mouse-ear cress).